Consider the following 390-residue polypeptide: Transforming growth factor beta-1 proprotein (390 aa).

The signal sequence occupies residues 1-29 (MPPSGLRLLPLLLPLPWLLVLTPGRPAAG). Positions 30–74 (LSTCKTIDMELVKRKRIEAIRGQILSKLRLASPPSQGEVPPGPLP) are straightjacket domain. Residues 75–271 (EAVLALYNST…ATPLERAQHL (197 aa)) are arm domain. Residues asparagine 82, asparagine 136, and asparagine 176 are each glycosylated (N-linked (GlcNAc...) asparagine). The interval 226–252 (DSKDNVLHVEINGISPKRRGDLGTIHD) is bowtie tail. Residues 244 to 246 (RGD) carry the Cell attachment site motif. 4 disulfides stabilise this stretch: cysteine 285–cysteine 294, cysteine 293–cysteine 356, cysteine 322–cysteine 387, and cysteine 326–cysteine 389.

Belongs to the TGF-beta family. In terms of assembly, homodimer; disulfide-linked. Interacts with the serine proteases, HTRA1 and HTRA3: the interaction with either inhibits TGFB1-mediated signaling and the HTRA protease activity is required for this inhibition. May interact with THSD4; this interaction may lead to sequestration by FBN1 microfibril assembly and attenuation of TGFB signaling. Interacts with CD109, DPT and ASPN. Interacts with EFEMP2. Interacts with TSKU; the interaction contributes to regulation of the hair cycle. Interacts with TGFBR3. As to quaternary structure, homodimer; disulfide-linked. Interacts with transforming growth factor beta-1 (TGF-beta-1) chain; interaction is non-covalent and maintains TGF-beta-1 in a latent state; each latency-associated peptide (LAP) monomer interacts with TGF-beta-1 in the other monomer. Interacts with LTBP1; leading to regulation of TGF-beta-1 activation. Interacts with LRRC32/GARP; leading to regulation of TGF-beta-1 activation on the surface of activated regulatory T-cells (Tregs). Interacts with LRRC33/NRROS; leading to regulation of TGF-beta-1 activation in macrophages and microglia. Interacts (via cell attachment site) with integrins ITGAV and ITGB6 (ITGAV:ITGB6), leading to release of the active TGF-beta-1. Interacts with NREP; the interaction results in a decrease in TGFB1 autoinduction. Interacts with HSP90AB1; inhibits latent TGFB1 activation. Homodimer; disulfide-linked. Interacts with TGF-beta receptors (TGFBR1 and TGFBR2), leading to signal transduction. Transforming growth factor beta-1 proprotein: The precursor proprotein is cleaved in the Golgi apparatus by FURIN to form Transforming growth factor beta-1 (TGF-beta-1) and Latency-associated peptide (LAP) chains, which remain non-covalently linked, rendering TGF-beta-1 inactive. In terms of processing, N-glycosylated. Deglycosylation leads to activation of Transforming growth factor beta-1 (TGF-beta-1); mechanisms triggering deglycosylation-driven activation of TGF-beta-1 are however unclear. As to expression, abundant in the bone matrix. Expressed in cardiomyocytes.

The protein resides in the secreted. The protein localises to the extracellular space. It localises to the extracellular matrix. In terms of biological role, transforming growth factor beta-1 proprotein: Precursor of the Latency-associated peptide (LAP) and Transforming growth factor beta-1 (TGF-beta-1) chains, which constitute the regulatory and active subunit of TGF-beta-1, respectively. Functionally, required to maintain the Transforming growth factor beta-1 (TGF-beta-1) chain in a latent state during storage in extracellular matrix. Associates non-covalently with TGF-beta-1 and regulates its activation via interaction with 'milieu molecules', such as LTBP1, LRRC32/GARP and LRRC33/NRROS, that control activation of TGF-beta-1. Interaction with LRRC33/NRROS regulates activation of TGF-beta-1 in macrophages and microglia. Interaction with LRRC32/GARP controls activation of TGF-beta-1 on the surface of activated regulatory T-cells (Tregs). Interaction with integrins (ITGAV:ITGB6 or ITGAV:ITGB8) results in distortion of the Latency-associated peptide chain and subsequent release of the active TGF-beta-1. Multifunctional protein that regulates the growth and differentiation of various cell types and is involved in various processes, such as normal development, immune function, microglia function and responses to neurodegeneration. Activation into mature form follows different steps: following cleavage of the proprotein in the Golgi apparatus, Latency-associated peptide (LAP) and Transforming growth factor beta-1 (TGF-beta-1) chains remain non-covalently linked rendering TGF-beta-1 inactive during storage in extracellular matrix. At the same time, LAP chain interacts with 'milieu molecules', such as LTBP1, LRRC32/GARP and LRRC33/NRROS that control activation of TGF-beta-1 and maintain it in a latent state during storage in extracellular milieus. TGF-beta-1 is released from LAP by integrins (ITGAV:ITGB6 or ITGAV:ITGB8): integrin-binding to LAP stabilizes an alternative conformation of the LAP bowtie tail and results in distortion of the LAP chain and subsequent release of the active TGF-beta-1. Once activated following release of LAP, TGF-beta-1 acts by binding to TGF-beta receptors (TGFBR1 and TGFBR2), which transduce signal. While expressed by many cells types, TGF-beta-1 only has a very localized range of action within cell environment thanks to fine regulation of its activation by Latency-associated peptide chain (LAP) and 'milieu molecules'. Plays an important role in bone remodeling: acts as a potent stimulator of osteoblastic bone formation, causing chemotaxis, proliferation and differentiation in committed osteoblasts. Can promote either T-helper 17 cells (Th17) or regulatory T-cells (Treg) lineage differentiation in a concentration-dependent manner. At high concentrations, leads to FOXP3-mediated suppression of RORC and down-regulation of IL-17 expression, favoring Treg cell development. At low concentrations in concert with IL-6 and IL-21, leads to expression of the IL-17 and IL-23 receptors, favoring differentiation to Th17 cells. Stimulates sustained production of collagen through the activation of CREB3L1 by regulated intramembrane proteolysis (RIP). Mediates SMAD2/3 activation by inducing its phosphorylation and subsequent translocation to the nucleus. Positively regulates odontoblastic differentiation in dental papilla cells, via promotion of IPO7-mediated translocation of phosphorylated SMAD2 to the nucleus and subsequent transcription of target genes. Can induce epithelial-to-mesenchymal transition (EMT) and cell migration in various cell types. This chain is Transforming growth factor beta-1 proprotein (Tgfb1), found in Rattus norvegicus (Rat).